Consider the following 342-residue polypeptide: MSARPGLLARAEARLTREWQRRGALAWALTPFACAFGAIAALRRAAYARGWKARVDCGVPVVVVGNVTVGGTGKTPTVIALVDALRAAGFTPGVVSRGYGAKIVAPTAVTPASAPQQAGDEPLLIARRTLAPVWVCPDRVAAVRALKAAHPEVDVVVSDDGLQHYRLARAVEIVVFDHRLGGNGFLLPAGPLREPLSRRRDATLVNDPYSRALPPWPDTFALSLAPGDAWHLARPSRRKPLAQFAGERVLAAAGIGAPERFFATLRAAGVTPATRALPDHYAFATNPFVDDHFDAILITEKDAVKLGTSWRDARIWVVPVEAALDPRLIALVVEKLRGRTSA.

68 to 75 (TVGGTGKT) contributes to the ATP binding site.

Belongs to the LpxK family.

The catalysed reaction is a lipid A disaccharide + ATP = a lipid IVA + ADP + H(+). The protein operates within glycolipid biosynthesis; lipid IV(A) biosynthesis; lipid IV(A) from (3R)-3-hydroxytetradecanoyl-[acyl-carrier-protein] and UDP-N-acetyl-alpha-D-glucosamine: step 6/6. Transfers the gamma-phosphate of ATP to the 4'-position of a tetraacyldisaccharide 1-phosphate intermediate (termed DS-1-P) to form tetraacyldisaccharide 1,4'-bis-phosphate (lipid IVA). In Burkholderia thailandensis (strain ATCC 700388 / DSM 13276 / CCUG 48851 / CIP 106301 / E264), this protein is Tetraacyldisaccharide 4'-kinase.